Consider the following 586-residue polypeptide: Acyl-coenzyme A synthetase ACSM3, mitochondrial (586 aa).

The transit peptide at 1-27 (MLACVTMKMLRHAKCFQRLAIFGSVRA) directs the protein to the mitochondrion. Lys73 and Lys106 each carry N6-succinyllysine. Lys157 is modified (N6-acetyllysine). Residues 235 to 243 (TSGTSGYPK), 374 to 379 (EGYGQT), Asp461, Arg476, and Lys572 contribute to the ATP site.

Belongs to the ATP-dependent AMP-binding enzyme family. Mg(2+) is required as a cofactor. It depends on Mn(2+) as a cofactor.

The protein localises to the mitochondrion. It is found in the mitochondrion matrix. It catalyses the reaction a medium-chain fatty acid + ATP + CoA = a medium-chain fatty acyl-CoA + AMP + diphosphate. It carries out the reaction propanoate + ATP + CoA = propanoyl-CoA + AMP + diphosphate. The catalysed reaction is butanoate + ATP + CoA = butanoyl-CoA + AMP + diphosphate. The enzyme catalyses 2-methylpropanoate + ATP + CoA = 2-methylpropanoyl-CoA + AMP + diphosphate. It catalyses the reaction 2-methylbutanoate + ATP + CoA = 2-methylbutanoyl-CoA + AMP + diphosphate. It carries out the reaction octanoate + ATP + CoA = octanoyl-CoA + AMP + diphosphate. Functionally, catalyzes the activation of fatty acids by CoA to produce an acyl-CoA, the first step in fatty acid metabolism. Capable of activating medium-chain fatty acids with a preference for isobutyrate among fatty acids with 2-6 carbon atoms. The sequence is that of Acyl-coenzyme A synthetase ACSM3, mitochondrial (ACSM3) from Pongo abelii (Sumatran orangutan).